A 62-amino-acid polypeptide reads, in one-letter code: Large ribosomal subunit protein uL29 (62 aa).

Belongs to the universal ribosomal protein uL29 family.

The chain is Large ribosomal subunit protein uL29 from Enterococcus faecalis (strain ATCC 700802 / V583).